Consider the following 374-residue polypeptide: All-trans-retinol dehydrogenase [NAD(+)] ADH7 (374 aa).

The residue at position 1 (methionine 1) is an N-acetylmethionine. Positions 47, 68, 98, 101, 104, 112, and 174 each coordinate Zn(2+). Residues 199–204 (GLGGVG), aspartate 223, lysine 228, 292–294 (VGA), and arginine 369 contribute to the NAD(+) site.

Belongs to the zinc-containing alcohol dehydrogenase family. Class-IV subfamily. In terms of assembly, homodimer. Requires Zn(2+) as cofactor. As to expression, preferentially expressed in stomach.

Its subcellular location is the cytoplasm. The catalysed reaction is a primary alcohol + NAD(+) = an aldehyde + NADH + H(+). It carries out the reaction 10-hydroxydecanoate + NAD(+) = 10-oxodecanoate + NADH + H(+). The enzyme catalyses all-trans-retinol + NAD(+) = all-trans-retinal + NADH + H(+). It catalyses the reaction 9-cis-retinol + NAD(+) = 9-cis-retinal + NADH + H(+). The catalysed reaction is all-trans-3,4-didehydroretinol + NAD(+) = all-trans-3,4-didehydroretinal + NADH + H(+). It carries out the reaction all-trans-4-hydroxyretinol + NAD(+) = all-trans-4-hydroxyretinal + NADH + H(+). The enzyme catalyses all-trans-4-oxoretinol + NAD(+) = all-trans-4-oxoretinal + NADH + H(+). It catalyses the reaction 12-hydroxydodecanoate + NAD(+) = 12-oxododecanoate + NADH + H(+). The catalysed reaction is 16-hydroxyhexadecanoate + NAD(+) = 16-oxohexadecanoate + NADH + H(+). It carries out the reaction hexan-1-ol + NAD(+) = hexanal + NADH + H(+). The enzyme catalyses (E)-hex-2-en-1-ol + NAD(+) = (E)-hex-2-enal + NADH + H(+). It catalyses the reaction (E)-4-hydroxynon-2-en-1-ol + NAD(+) = (E)-4-hydroxynon-2-enal + NADH + H(+). With respect to regulation, retinol oxidation is inhibited by the detergent Tween 80. Ethanol inhibits both all-trans-retinol and 9-cis-retinol oxidation. 13-cis-retinol is an effective competitive inhibitor of the 9-cis-retinol oxidation. All-trans-retinoic acid is a powerful inhibitor of all-trans-retinol oxidation. 13-cis-retinoic acid is a powerful inhibitor of all-trans-retinol oxidation. Cimetidine and ranitidine inhibited ethanol oxidation. Functionally, catalyzes the NAD-dependent oxidation of all-trans-retinol, alcohol, aldehyde and omega-hydroxy fatty acids and their derivatives. Oxidizes preferentially all trans-retinol, all-trans-4-hydroxyretinol, 9-cis-retinol, 2-hexenol, and long chain omega-hydroxy fatty acids such as juniperic acid. In vitro can also catalyze the NADH-dependent reduction of all-trans-retinal and aldehydes and their derivatives. Reduces preferentially all trans-retinal, all-trans-4-oxoretinal and hexanal. Catalyzes in the oxidative direction with higher efficiency. Therefore may participate in retinoid metabolism, fatty acid omega-oxidation, and elimination of cytotoxic aldehydes produced by lipid peroxidation. This chain is All-trans-retinol dehydrogenase [NAD(+)] ADH7 (Adh7), found in Rattus norvegicus (Rat).